The following is a 398-amino-acid chain: Heat-inducible transcription repressor HrcA (398 aa).

It belongs to the HrcA family.

Functionally, negative regulator of class I heat shock genes (grpE-dnaK-dnaJ and groELS operons). Prevents heat-shock induction of these operons. The protein is Heat-inducible transcription repressor HrcA of Chlamydia pneumoniae (Chlamydophila pneumoniae).